Reading from the N-terminus, the 299-residue chain is 4-hydroxybenzoate octaprenyltransferase (299 aa).

8 consecutive transmembrane segments (helical) span residues 33–53 (VGFLLLLWPTWWALWLAADGV), 56–76 (WWTLCVFTTGIWLTRSAGCVI), 107–127 (LLMFATLMLIAFGLVLTMNQL), 151–171 (LPQVYLGLAFGWGIPMAFAAI), 180–200 (WLLYIANILWTTAYDTWYAMV), 213–233 (IAILFAELDLVVQGVLYTLML), 247–267 (HTYWISLISAVALIGYQFIIA), and 278–298 (AFMHNNWVGMTIFAGIALATT).

This sequence belongs to the UbiA prenyltransferase family. Mg(2+) serves as cofactor.

It is found in the cell inner membrane. It carries out the reaction all-trans-octaprenyl diphosphate + 4-hydroxybenzoate = 4-hydroxy-3-(all-trans-octaprenyl)benzoate + diphosphate. It functions in the pathway cofactor biosynthesis; ubiquinone biosynthesis. In terms of biological role, catalyzes the prenylation of para-hydroxybenzoate (PHB) with an all-trans polyprenyl group. Mediates the second step in the final reaction sequence of ubiquinone-8 (UQ-8) biosynthesis, which is the condensation of the polyisoprenoid side chain with PHB, generating the first membrane-bound Q intermediate 3-octaprenyl-4-hydroxybenzoate. The protein is 4-hydroxybenzoate octaprenyltransferase of Xylella fastidiosa (strain M12).